Consider the following 836-residue polypeptide: Glutamate receptor ionotropic, kainate glr-3 (836 aa).

The N-terminal stretch at 1–19 (MFWIAKTLIAFLILLKTDC) is a signal peptide. Residues 20 to 523 (YKIAIPANLI…WFKFMDPLST (504 aa)) are Extracellular-facing. C76 and C320 are oxidised to a cystine. Residues N225, N257, N356, N391, and N419 are each glycosylated (N-linked (GlcNAc...) asparagine). L-glutamate is bound by residues 478 to 480 (SLT) and R485. The chain crosses the membrane as a helical span at residues 524–544 (QVWIMTFASYFVVSVAIWIIA). Topologically, residues 545-600 (KISPYEQFERDEDNGQYKPVDNQFSLRNSFWFTVCSLMQQGSELCPRAASTRLLTG) are cytoplasmic. A helical transmembrane segment spans residues 601 to 621 (IWWFFALILISSYTANLAAVL). Residues 622–780 (TTRRMETPIE…KRKDQDDGES (159 aa)) are Extracellular-facing. 651 to 652 (ST) contacts L-glutamate. Residue N657 is glycosylated (N-linked (GlcNAc...) asparagine). Residue E699 participates in L-glutamate binding. A helical transmembrane segment spans residues 781–801 (IGGIFIILVVGLVLTAVLVIF). Over 802-836 (ELITTRKPSPAQSQVIRHVNVIPSFKLGFFRWNVN) the chain is Cytoplasmic.

It belongs to the glutamate-gated ion channel (TC 1.A.10.1) family. In terms of tissue distribution, expressed in the intestine and in the ASER neuron. Also expressed in the thermosensitive RIA interneuron.

The protein localises to the cell membrane. It is found in the postsynaptic cell membrane. With respect to regulation, activated by low temperature of 18 degrees Celsius in ASER neuron. Functionally, ionotropic glutamate receptor. Activation by glutamate requires additional verification. L-glutamate acts as an excitatory neurotransmitter at many synapses in the central nervous system. Binding of the excitatory neurotransmitter L-glutamate induces a conformation change, leading to the opening of the cation channel, and thereby converts the chemical signal to an electrical impulse. The receptor then desensitizes rapidly and enters a transient inactive state, characterized by the presence of bound agonist. Its function is as follows. Independent of its ionotropic glutamate receptor activity, acts as a thermoreceptor in the ASER neuron where it triggers a calcium response to activate cold avoidance behavior in response to temperatures below 19 degrees Celsius. Possibly functions as a metabotropic cold receptor and acts upstream of the G(o) G protein goa-1 in the ASER neuron. Also functions in cold sensing in the intestine. This Caenorhabditis elegans protein is Glutamate receptor ionotropic, kainate glr-3.